The following is a 363-amino-acid chain: Cytoplasmic tRNA 2-thiolation protein 1 (363 aa).

The interval 340 to 363 (ASLNGTPRTPPTPAEPVEGIERAA) is disordered.

This sequence belongs to the TtcA family. CTU1/NCS6/ATPBD3 subfamily.

The protein localises to the cytoplasm. The protein operates within tRNA modification; 5-methoxycarbonylmethyl-2-thiouridine-tRNA biosynthesis. Its function is as follows. Plays a central role in 2-thiolation of mcm(5)S(2)U at tRNA wobble positions of tRNA(Lys), tRNA(Glu) and tRNA(Gln). Directly binds tRNAs and probably acts by catalyzing adenylation of tRNAs, an intermediate required for 2-thiolation. It is unclear whether it acts as a sulfurtransferase that transfers sulfur from thiocarboxylated URM1 onto the uridine of tRNAs at wobble position. Prior mcm(5) tRNA modification by the elongator complex is required for 2-thiolation. May also be involved in protein urmylation. The sequence is that of Cytoplasmic tRNA 2-thiolation protein 1 from Cryptococcus neoformans var. neoformans serotype D (strain B-3501A) (Filobasidiella neoformans).